The sequence spans 1220 residues: Plasma membrane calcium-transporting ATPase 1 (1220 aa).

An N-acetylglycine modification is found at glycine 2. Residues glycine 2–alanine 105 are Cytoplasmic-facing. Serine 8 and serine 17 each carry phosphoserine. Residues leucine 106 to phenylalanine 126 traverse the membrane as a helical segment. At tyrosine 127–isoleucine 154 the chain is on the extracellular side. A helical transmembrane segment spans residues glutamate 155–tryptophan 175. The Cytoplasmic portion of the chain corresponds to serine 176 to leucine 366. Residues glutamate 297–lysine 356 form a disordered region. 2 stretches are compositionally biased toward basic and acidic residues: residues lysine 312–aspartate 327 and lysine 337–lysine 356. Phosphoserine is present on serine 338. A helical membrane pass occupies residues threonine 367–isoleucine 386. At isoleucine 387–lysine 418 the chain is on the extracellular side. The helical transmembrane segment at phenylalanine 419–valine 439 threads the bilayer. At threonine 440–phenylalanine 855 the chain is on the cytoplasmic side. Aspartate 475 functions as the 4-aspartylphosphate intermediate in the catalytic mechanism. Mg(2+)-binding residues include aspartate 475, threonine 477, and aspartate 797. The chain crosses the membrane as a helical span at residues leucine 856 to isoleucine 876. Residues threonine 877–leucine 882 lie on the Extracellular side of the membrane. The helical transmembrane segment at lysine 883–alanine 903 threads the bilayer. The Cytoplasmic segment spans residues threonine 904–threonine 927. A helical transmembrane segment spans residues methionine 928–leucine 948. Topologically, residues alanine 949–histidine 971 are extracellular. The helical transmembrane segment at tyrosine 972–arginine 991 threads the bilayer. Residues lysine 992–asparagine 1005 lie on the Cytoplasmic side of the membrane. A helical membrane pass occupies residues asparagine 1006 to alanine 1027. At glycine 1028–glutamate 1039 the chain is on the extracellular side. Residues glutamine 1040–threonine 1060 traverse the membrane as a helical segment. Residues isoleucine 1061–leucine 1220 are Cytoplasmic-facing. Residues leucine 1100 to glutamine 1117 are calmodulin-binding subdomain A. Threonine 1116 is modified (phosphothreonine; by PKC). Residues isoleucine 1118–leucine 1220 form a required for basolateral membrane targeting region. 2 positions are modified to phosphoserine: serine 1140 and serine 1155. The tract at residues proline 1160–leucine 1220 is disordered. A Phosphothreonine modification is found at threonine 1165. A Phosphoserine; by PKA modification is found at serine 1177. Residues serine 1178 and serine 1182 each carry the phosphoserine modification. Residues methionine 1200–leucine 1220 show a composition bias toward polar residues.

It belongs to the cation transport ATPase (P-type) (TC 3.A.3) family. Type IIB subfamily. As to quaternary structure, monomer. Dimer. Oligomer. Calmodulin binding. Interacts with PDZD11. Interacts with SLC35G1 and STIM1. Interacts with YWHAE; interacts with the monomeric and dimeric forms of the YWHAE but prefer the monomer form; this interaction inhibits calcium-transporting ATPase activity. Interacts with NPTN; this interaction stabilizes ATP2B1 and increases ATPase activity; this interaction controls T cell calcium homeostasis following T cell activation. Interacts with EPB41; regulates small intestinal calcium absorption through regulation of membrane expression of ATP2B1. As to expression, isoform B is ubiquitously expressed and is the most predominant isoform. Isoform C is expressed at much lower levels in all tissues tested, but liver, while isoform A is found only in aorta, brain and stomach.

It is found in the cell membrane. It localises to the basolateral cell membrane. The protein resides in the synapse. Its subcellular location is the presynaptic cell membrane. The protein localises to the cytoplasmic vesicle. It is found in the secretory vesicle. It localises to the synaptic vesicle membrane. It catalyses the reaction Ca(2+)(in) + ATP + H2O = Ca(2+)(out) + ADP + phosphate + H(+). Functionally, catalyzes the hydrolysis of ATP coupled with the transport of calcium from the cytoplasm to the extracellular space thereby maintaining intracellular calcium homeostasis. Plays a role in blood pressure regulation through regulation of intracellular calcium concentration and nitric oxide production leading to regulation of vascular smooth muscle cells vasoconstriction. Positively regulates bone mineralization through absorption of calcium from the intestine. Plays dual roles in osteoclast differentiation and survival by regulating RANKL-induced calcium oscillations in preosteoclasts and mediating calcium extrusion in mature osteoclasts. Regulates insulin sensitivity through calcium/calmodulin signaling pathway by regulating AKT1 activation and NOS3 activation in endothelial cells. May play a role in synaptic transmission by modulating calcium and proton dynamics at the synaptic vesicles. The chain is Plasma membrane calcium-transporting ATPase 1 from Oryctolagus cuniculus (Rabbit).